Consider the following 90-residue polypeptide: Probable Fe(2+)-trafficking protein (90 aa).

This sequence belongs to the Fe(2+)-trafficking protein family.

In terms of biological role, could be a mediator in iron transactions between iron acquisition and iron-requiring processes, such as synthesis and/or repair of Fe-S clusters in biosynthetic enzymes. This chain is Probable Fe(2+)-trafficking protein, found in Xylella fastidiosa (strain 9a5c).